Here is a 118-residue protein sequence, read N- to C-terminus: HTH-type transcriptional regulator SarT (118 aa).

Residues 55-78 (MRDIISYIGIDQSRIVKSVKELSK) constitute a DNA-binding region (H-T-H motif).

Belongs to the SarA family.

The protein resides in the cytoplasm. Its function is as follows. Transcriptional regulator acting as an intermediary between major regulators SarA and agr and virulence genes. Represses alpha-hemolysin (hla) gene expression. This chain is HTH-type transcriptional regulator SarT (sarT), found in Staphylococcus aureus (strain Mu50 / ATCC 700699).